A 325-amino-acid chain; its full sequence is Tetraacyldisaccharide 4'-kinase (325 aa).

58–65 (TVGGSGKT) contributes to the ATP binding site.

Belongs to the LpxK family.

It carries out the reaction a lipid A disaccharide + ATP = a lipid IVA + ADP + H(+). The protein operates within glycolipid biosynthesis; lipid IV(A) biosynthesis; lipid IV(A) from (3R)-3-hydroxytetradecanoyl-[acyl-carrier-protein] and UDP-N-acetyl-alpha-D-glucosamine: step 6/6. Functionally, transfers the gamma-phosphate of ATP to the 4'-position of a tetraacyldisaccharide 1-phosphate intermediate (termed DS-1-P) to form tetraacyldisaccharide 1,4'-bis-phosphate (lipid IVA). This chain is Tetraacyldisaccharide 4'-kinase, found in Coxiella burnetii (strain RSA 331 / Henzerling II).